The sequence spans 776 residues: Homoaconitase, mitochondrial (776 aa).

The N-terminal 38 residues, methionine 1–phenylalanine 38, are a transit peptide targeting the mitochondrion. [4Fe-4S] cluster contacts are provided by cysteine 394, cysteine 463, and cysteine 466.

It belongs to the aconitase/IPM isomerase family. [4Fe-4S] cluster is required as a cofactor.

Its subcellular location is the mitochondrion. The enzyme catalyses (2R,3S)-homoisocitrate = cis-homoaconitate + H2O. Its pathway is amino-acid biosynthesis; L-lysine biosynthesis via AAA pathway; L-alpha-aminoadipate from 2-oxoglutarate: step 3/5. In terms of biological role, catalyzes the reversible hydration of cis-homoaconitate to (2R,3S)-homoisocitrate, a step in the alpha-aminoadipate pathway for lysine biosynthesis. The sequence is that of Homoaconitase, mitochondrial (lys4) from Emericella nidulans (strain FGSC A4 / ATCC 38163 / CBS 112.46 / NRRL 194 / M139) (Aspergillus nidulans).